The primary structure comprises 1029 residues: Beta-galactosidase (1029 aa).

Substrate is bound by residues asparagine 108 and aspartate 207. Aspartate 207 lines the Na(+) pocket. The Mg(2+) site is built by glutamate 422, histidine 424, and glutamate 467. Residues glutamate 467 and 543 to 546 each bind substrate; that span reads EYAH. Glutamate 467 functions as the Proton donor in the catalytic mechanism. Catalysis depends on glutamate 543, which acts as the Nucleophile. Residue asparagine 603 coordinates Mg(2+). Phenylalanine 607 and asparagine 610 together coordinate Na(+). 2 residues coordinate substrate: asparagine 610 and tryptophan 1005.

Belongs to the glycosyl hydrolase 2 family. Homotetramer. Mg(2+) serves as cofactor. Requires Na(+) as cofactor.

The catalysed reaction is Hydrolysis of terminal non-reducing beta-D-galactose residues in beta-D-galactosides.. The chain is Beta-galactosidase from Escherichia coli.